Here is a 150-residue protein sequence, read N- to C-terminus: 3-dehydroquinate dehydratase (150 aa).

Tyrosine 22 functions as the Proton acceptor in the catalytic mechanism. Asparagine 73, histidine 79, and aspartate 86 together coordinate substrate. Histidine 99 serves as the catalytic Proton donor. Substrate is bound by residues 100–101 (LS) and arginine 110.

Belongs to the type-II 3-dehydroquinase family. In terms of assembly, homododecamer.

It carries out the reaction 3-dehydroquinate = 3-dehydroshikimate + H2O. Its pathway is metabolic intermediate biosynthesis; chorismate biosynthesis; chorismate from D-erythrose 4-phosphate and phosphoenolpyruvate: step 3/7. Its function is as follows. Catalyzes a trans-dehydration via an enolate intermediate. The chain is 3-dehydroquinate dehydratase from Dinoroseobacter shibae (strain DSM 16493 / NCIMB 14021 / DFL 12).